The sequence spans 251 residues: 3-deoxy-manno-octulosonate cytidylyltransferase (251 aa).

The protein belongs to the KdsB family.

The protein localises to the cytoplasm. It carries out the reaction 3-deoxy-alpha-D-manno-oct-2-ulosonate + CTP = CMP-3-deoxy-beta-D-manno-octulosonate + diphosphate. Its pathway is nucleotide-sugar biosynthesis; CMP-3-deoxy-D-manno-octulosonate biosynthesis; CMP-3-deoxy-D-manno-octulosonate from 3-deoxy-D-manno-octulosonate and CTP: step 1/1. It functions in the pathway bacterial outer membrane biogenesis; lipopolysaccharide biosynthesis. In terms of biological role, activates KDO (a required 8-carbon sugar) for incorporation into bacterial lipopolysaccharide in Gram-negative bacteria. In Chelativorans sp. (strain BNC1), this protein is 3-deoxy-manno-octulosonate cytidylyltransferase.